An 862-amino-acid chain; its full sequence is Protein kintoun (862 aa).

Disordered regions lie at residues 208–229, 564–602, 626–670, and 743–854; these read KLLP…RTTK, TKRE…KKER, GEGA…STMP, and RREV…QFKS. The span at 564–586 shows a compositional bias: basic and acidic residues; the sequence is TKREEHGEPECDEKDGSEAEKAR. Positions 587-601 are enriched in basic residues; that stretch reads TLQKAKRNSRKKKKE. Basic and acidic residues-rich tracts occupy residues 748-757 and 766-785; these read RRADARRMSE and KDAH…HDEK.

Belongs to the PIH1 family. Kintoun subfamily.

The protein resides in the cytoplasm. In terms of biological role, required for cytoplasmic pre-assembly of axonemal dyneins, thereby playing a central role in motility in cilia and flagella. Involved in pre-assembly of dynein arm complexes in the cytoplasm before intraflagellar transport loads them for the ciliary compartment. This is Protein kintoun from Anopheles gambiae (African malaria mosquito).